The following is a 389-amino-acid chain: Growth/differentiation factor 2 (389 aa).

Residues 1–20 form the signal peptide; the sequence is MWRVGHLLLLMSIVFRITEE. The propeptide occupies 21 to 280; that stretch reads KSLGDAGSLE…PVSNRHRRRK (260 aa). N-linked (GlcNAc...) asparagine glycosylation is found at Asn-65, Asn-118, Asn-127, and Asn-232. Positions 263 to 272 are enriched in polar residues; that stretch reads QQQVGNQAPV. The segment at 263-284 is disordered; sequence QQQVGNQAPVSNRHRRRKRKAK. The segment covering 274-284 has biased composition (basic residues); that stretch reads NRHRRRKRKAK. 3 disulfide bridges follow: Cys-288–Cys-354, Cys-317–Cys-386, and Cys-321–Cys-388. N-linked (GlcNAc...) asparagine glycosylation is present at Asn-342.

Belongs to the TGF-beta family. As to quaternary structure, homodimer; disulfide-linked. Post-translationally, a reversible disulfide bond can be formed between the two subunits in the homodimer; this has no effect on gdf2 activity.

The protein localises to the secreted. Its function is as follows. Potent circulating inhibitor of angiogenesis. Signals through the type I activin receptor ACVRL1 but not other Alks. Signaling through SMAD1 in endothelial cells requires TGF-beta coreceptor endoglin/eng. The sequence is that of Growth/differentiation factor 2 (gdf2) from Danio rerio (Zebrafish).